Here is a 232-residue protein sequence, read N- to C-terminus: Large ribosomal subunit protein uL1 (232 aa).

It belongs to the universal ribosomal protein uL1 family. In terms of assembly, part of the 50S ribosomal subunit.

Functionally, binds directly to 23S rRNA. The L1 stalk is quite mobile in the ribosome, and is involved in E site tRNA release. In terms of biological role, protein L1 is also a translational repressor protein, it controls the translation of the L11 operon by binding to its mRNA. The sequence is that of Large ribosomal subunit protein uL1 from Levilactobacillus brevis (strain ATCC 367 / BCRC 12310 / CIP 105137 / JCM 1170 / LMG 11437 / NCIMB 947 / NCTC 947) (Lactobacillus brevis).